A 249-amino-acid chain; its full sequence is ATP synthase subunits region ORF 6 (249 aa).

The sequence is that of ATP synthase subunits region ORF 6 from Fuscovulum blasticum (Rhodobacter blasticus).